The primary structure comprises 622 residues: Polypeptide N-acetylgalactosaminyltransferase 6 (622 aa).

At Met-1 to His-8 the chain is on the cytoplasmic side. Residues Met-9–His-28 traverse the membrane as a helical; Signal-anchor for type II membrane protein segment. Residues Arg-29–Val-622 lie on the Lumenal side of the membrane. Residue Asn-86 is glycosylated (N-linked (GlcNAc...) asparagine). Cystine bridges form between Cys-165–Cys-402 and Cys-393–Cys-474. Residues Leu-176–Arg-285 are catalytic subdomain A. The Mn(2+) site is built by Asp-269, His-271, and His-407. Residues Pro-348–Arg-410 form a catalytic subdomain B region. An N-linked (GlcNAc...) asparagine glycan is attached at Asn-476. In terms of domain architecture, Ricin B-type lectin spans Thr-506–Val-622. Cys-509 and Cys-527 form a disulfide bridge. UDP-N-acetyl-alpha-D-galactosamine contacts are provided by Asp-511, Glu-514, His-528, and Asn-533. Cystine bridges form between Cys-553–Cys-566 and Cys-597–Cys-610.

It belongs to the glycosyltransferase 2 family. GalNAc-T subfamily. Mn(2+) serves as cofactor. Expressed in placenta and trachea. Weakly expressed in brain and pancreas. Expressed in fibroblast. Weakly or not expressed in lung, liver, muscle, kidney, spleen, thymus, prostate, testis, ovary, intestine, colon, leukocyte, stomach, thyroid, spinal cord, lymph node, trachea, adrenal gland and bone marrow.

Its subcellular location is the golgi apparatus membrane. The enzyme catalyses L-seryl-[protein] + UDP-N-acetyl-alpha-D-galactosamine = a 3-O-[N-acetyl-alpha-D-galactosaminyl]-L-seryl-[protein] + UDP + H(+). The catalysed reaction is L-threonyl-[protein] + UDP-N-acetyl-alpha-D-galactosamine = a 3-O-[N-acetyl-alpha-D-galactosaminyl]-L-threonyl-[protein] + UDP + H(+). It functions in the pathway protein modification; protein glycosylation. Functionally, catalyzes the initial reaction in O-linked oligosaccharide biosynthesis, the transfer of an N-acetyl-D-galactosamine residue to a serine or threonine residue on the protein receptor. May participate in synthesis of oncofetal fibronectin. Has activity toward MUC1A, MUC2, EA2 and fibronectin peptides. Glycosylates FGF23. This chain is Polypeptide N-acetylgalactosaminyltransferase 6 (GALNT6), found in Homo sapiens (Human).